Reading from the N-terminus, the 461-residue chain is UPF0210 protein Ddes_0622 (461 aa).

The protein belongs to the UPF0210 family. In terms of assembly, homodimer.

This Desulfovibrio desulfuricans (strain ATCC 27774 / DSM 6949 / MB) protein is UPF0210 protein Ddes_0622.